Consider the following 104-residue polypeptide: Transcription initiation factor IIA subunit 2 (104 aa).

Belongs to the TFIIA subunit 2 family. As to quaternary structure, TFIIA is a heterodimer of the large unprocessed subunit 1 and a small subunit gamma.

The protein resides in the nucleus. Its function is as follows. TFIIA is a component of the transcription machinery of RNA polymerase II and plays an important role in transcriptional activation. TFIIA in a complex with TBP mediates transcriptional activity. The chain is Transcription initiation factor IIA subunit 2 from Schistosoma mansoni (Blood fluke).